We begin with the raw amino-acid sequence, 267 residues long: CD82 antigen (267 aa).

Residues 1-11 (MGSACIKVTKY) lie on the Cytoplasmic side of the membrane. Cys-5 carries the S-palmitoyl cysteine lipid modification. A helical transmembrane segment spans residues 12 to 32 (FLFLFNLIFFILGAVILGFGV). The Extracellular portion of the chain corresponds to 33–53 (WILADKSSFISVLQTSSSSLR). A helical membrane pass occupies residues 54-72 (MGAYVFIGVGAVTMLMGFL). Residues 73-83 (GCIGAVNEVRC) are Cytoplasmic-facing. The S-palmitoyl cysteine moiety is linked to residue Cys-74. Residues 84 to 110 (LLGLYFAFLLLILIAQVTAGALFYFNM) form a helical membrane-spanning segment. The Extracellular portion of the chain corresponds to 111–228 (GKLKQEMGGI…KVQAWLQENL (118 aa)). N-linked (GlcNAc...) asparagine glycans are attached at residues Asn-129, Asn-157, and Asn-198. A helical transmembrane segment spans residues 229 to 250 (GIILGVGVGVAIIELLGMVLSI). Residues 251–267 (CLCRHVHSEDYSKVPKY) lie on the Cytoplasmic side of the membrane.

Belongs to the tetraspanin (TM4SF) family. In terms of assembly, forms homooligomers. Interacts directly with IGSF8. Interacts with EGFR. Interacts with VEGFA and PDGFB. Interacts with ITGA4. Interacts with ITGA6; this interaction reduces ITGA6 cell surface expression. Interacts with ITGB1. Interacts with TLR4; this interaction inhibits TLR4-mediated signaling pathway. Interacts with TLR9. Interacts with PLAUR. In terms of processing, palmitoylated. Palmitoylation contributes to oligomerization and surface expression. In terms of tissue distribution, lymphoid specific.

Its subcellular location is the cell membrane. The protein resides in the cytoplasmic vesicle. It localises to the phagosome. Its function is as follows. Structural component of specialized membrane microdomains known as tetraspanin-enriched microdomains (TERMs), which act as platforms for receptor clustering and signaling. Participates thereby in diverse biological functions such as cell signal transduction, adhesion, migration and protein trafficking. Acts as a attenuator of EGF signaling, facilitating ligand-induced endocytosis of the receptor and its subsequent desensitization. Mechanistically, modulates ligand-induced ubiquitination and trafficking of EGFR via E3 ligase CBL phosphorylation by PKC. Increases cell-matrix adhesion by regulating the membrane organization of integrin alpha4/ITA4. Modulates adhesion and suppresses cell migration through other integrins such as the alpha6/ITGA6 and beta1/ITGB1. Decreases cell-associated plasminogen activation by interfering with the interaction between urokinase-type plasminogen activator/PLAU and its receptor PLAUR. Associates with CD4 or CD8 and delivers costimulatory signals for the TCR/CD3 pathway. Plays a role in TLR9 trafficking to acidified CpG-containing compartments by controlling interaction between TLR9 and VAMP3 and subsequent myddosome assembly. Inhibits LPS-induced inflammatory response by preventing binding of LPS to TLR4 on the cell surface. Plays a role in the activation of macrophages into anti-inflammatory phenotypes. Independently of Toll-like receptor (TLR) signaling, is recruited to pathogen-containing phagosomes prior to fusion with lysosomes and thereby participates in antigen presentation. Also acts to control angiogenesis and switch angiogenic milieu to quiescent state by binding and sequestering VEGFA and PDGFB to inhibit the signaling they trigger via their respective cell surface receptor. This chain is CD82 antigen (CD82), found in Homo sapiens (Human).